Reading from the N-terminus, the 39-residue chain is Neuropeptide F (39 aa).

F39 carries the post-translational modification Phenylalanine amide.

This sequence belongs to the NPY family. In terms of tissue distribution, neuronal somata and fibers.

It localises to the secreted. Functionally, may have an important physiological role in neuroregulation. This is Neuropeptide F from Cornu aspersum (Brown garden snail).